The primary structure comprises 534 residues: Protein BFR2 (534 aa).

A disordered region spans residues 27-148 (ENASLFQHNE…ETEEAQQKRH (122 aa)). A phosphoserine mark is found at Ser-41 and Ser-44. Over residues 52–77 (EETKKAHYLEVEKSKLRAEKGLELND) the composition is skewed to basic and acidic residues. The stretch at 86 to 161 (SRQALYEEVS…KLIQQETKQA (76 aa)) forms a coiled coil. Acidic residues-rich tracts occupy residues 93-114 (EVSE…EEDA) and 121-142 (SEDE…ETEE). 3 positions are modified to phosphoserine: Ser-366, Ser-372, and Ser-379.

The protein belongs to the AATF family.

The protein resides in the nucleus. The protein localises to the nucleolus. Functionally, involved in endoplasmic reticulum to Golgi transport. Involved in a protein-transport step blocked by brefeldin A, which disrupts the Golgi apparatus and its incoming protein flux. May also be involved for mass growth or cell proliferation. The protein is Protein BFR2 (BFR2) of Saccharomyces cerevisiae (strain ATCC 204508 / S288c) (Baker's yeast).